Here is a 146-residue protein sequence, read N- to C-terminus: Probable calcium-binding protein CML40 (146 aa).

The 36-residue stretch at 7–42 (NKRDEYQRVFSCFDKSHQGKVSVSTIERCVDAIKSG) folds into the EF-hand 1 domain. A disordered region spans residues 44–65 (RAVVDQEDTTNPNPEESTDDKS). One can recognise an EF-hand 2 domain in the interval 116 to 146 (KSLKDCEVMISQFDINRDGIINFDEFRAMMQ). 4 residues coordinate Ca(2+): aspartate 129, asparagine 131, aspartate 133, and glutamate 140.

In terms of biological role, potential calcium sensor. The chain is Probable calcium-binding protein CML40 (CML40) from Arabidopsis thaliana (Mouse-ear cress).